A 231-amino-acid polypeptide reads, in one-letter code: Orotate phosphoribosyltransferase (231 aa).

Lys-29 contacts 5-phospho-alpha-D-ribose 1-diphosphate. Residue 37–38 (FF) coordinates orotate. 5-phospho-alpha-D-ribose 1-diphosphate-binding positions include 75-76 (YK), Arg-107, Lys-108, Lys-111, His-113, and 133-141 (DDVISRCTA). 2 residues coordinate orotate: Ser-137 and Arg-165.

The protein belongs to the purine/pyrimidine phosphoribosyltransferase family. PyrE subfamily. Homodimer.

It carries out the reaction orotidine 5'-phosphate + diphosphate = orotate + 5-phospho-alpha-D-ribose 1-diphosphate. The protein operates within pyrimidine metabolism; UMP biosynthesis via de novo pathway; UMP from orotate: step 1/2. In terms of biological role, catalyzes the transfer of a ribosyl phosphate group from 5-phosphoribose 1-diphosphate to orotate, leading to the formation of orotidine monophosphate (OMP). This chain is Orotate phosphoribosyltransferase (URA5), found in Podospora anserina (Pleurage anserina).